We begin with the raw amino-acid sequence, 150 residues long: Cyclin-dependent kinases regulatory subunit (150 aa).

The span at 115–137 (AAAQQQQQQQQQQQQQQQQHQTQ) shows a compositional bias: low complexity. The interval 115-150 (AAAQQQQQQQQQQQQQQQQHQTQSISNDMQVPPQIS) is disordered.

It belongs to the CKS family. Forms a stable but non-covalent complex with the CDC28 protein and with a cyclin.

In terms of biological role, binds to the catalytic subunit of the cyclin dependent kinase (CDC28) and is essential for its biological function. The chain is Cyclin-dependent kinases regulatory subunit from Saccharomyces cerevisiae (strain ATCC 204508 / S288c) (Baker's yeast).